The primary structure comprises 359 residues: Peptide chain release factor 1 (359 aa).

At glutamine 233 the chain carries N5-methylglutamine.

This sequence belongs to the prokaryotic/mitochondrial release factor family. Post-translationally, methylated by PrmC. Methylation increases the termination efficiency of RF1.

It is found in the cytoplasm. Peptide chain release factor 1 directs the termination of translation in response to the peptide chain termination codons UAG and UAA. The chain is Peptide chain release factor 1 from Orientia tsutsugamushi (strain Boryong) (Rickettsia tsutsugamushi).